Here is a 370-residue protein sequence, read N- to C-terminus: A-type ATP synthase subunit C (370 aa).

It belongs to the V-ATPase V0D/AC39 subunit family. Has multiple subunits with at least A(3), B(3), C, D, E, F, H, I and proteolipid K(x).

It is found in the cell membrane. Functionally, component of the A-type ATP synthase that produces ATP from ADP in the presence of a proton gradient across the membrane. This Pyrococcus abyssi (strain GE5 / Orsay) protein is A-type ATP synthase subunit C.